The chain runs to 137 residues: MVKLGFVIAEFNRDLTFMMEKLAEEHAAFLGADVSCKIMVPGSFDMPLAIKTLLQKDDIDAVVTIGCVIEGDTEHDEIVVQNAARKIADLSLEFGKPVALGIAGPGMTRMQAEDRIDYGKSAVEAAVKMVKRLKEIQ.

5-amino-6-(D-ribitylamino)uracil-binding positions include Phe11, 43–45 (SFD), and 67–69 (CVI). 72–73 (DT) lines the (2S)-2-hydroxy-3-oxobutyl phosphate pocket. Catalysis depends on His75, which acts as the Proton donor. Leu100 lines the 5-amino-6-(D-ribitylamino)uracil pocket. Arg115 lines the (2S)-2-hydroxy-3-oxobutyl phosphate pocket.

Belongs to the DMRL synthase family. As to quaternary structure, forms an icosahedral capsid composed of 60 subunits, arranged as a dodecamer of pentamers.

It carries out the reaction (2S)-2-hydroxy-3-oxobutyl phosphate + 5-amino-6-(D-ribitylamino)uracil = 6,7-dimethyl-8-(1-D-ribityl)lumazine + phosphate + 2 H2O + H(+). It participates in cofactor biosynthesis; riboflavin biosynthesis; riboflavin from 2-hydroxy-3-oxobutyl phosphate and 5-amino-6-(D-ribitylamino)uracil: step 1/2. In terms of biological role, catalyzes the formation of 6,7-dimethyl-8-ribityllumazine by condensation of 5-amino-6-(D-ribitylamino)uracil with 3,4-dihydroxy-2-butanone 4-phosphate. This is the penultimate step in the biosynthesis of riboflavin. This chain is 6,7-dimethyl-8-ribityllumazine synthase, found in Methanococcus maripaludis (strain C6 / ATCC BAA-1332).